A 31-amino-acid chain; its full sequence is Potassium channel toxin alpha-KTx 19.2 (31 aa).

Disulfide bonds link Cys3–Cys22, Cys8–Cys27, and Cys12–Cys29.

This sequence belongs to the short scorpion toxin superfamily. Potassium channel inhibitor family. Alpha-KTx 19 subfamily. Monomer. In terms of tissue distribution, expressed by the venom gland.

It localises to the secreted. In terms of biological role, blocks voltage-gated potassium channels rKv1.1/KCNA1, rKv1.2/KCNA2, hKv1.3/KCNA3, rKv1.6/KCNA6 (IC(50)=75.9 nM) and, to a lesser extent, Shaker IR (with the inactivation domain removed). The polypeptide is Potassium channel toxin alpha-KTx 19.2 (Buthus occitanus tunetanus (Common European scorpion)).